The following is a 798-amino-acid chain: uncharacterized protein (798 aa).

Residues methionine 1–serine 13 show a composition bias toward low complexity. Residues methionine 1 to arginine 58 constitute a chloroplast transit peptide. Disordered regions lie at residues methionine 1 to alanine 99, alanine 135 to threonine 158, and threonine 417 to serine 473. A compositionally biased stretch (polar residues) spans valine 35 to phenylalanine 55. The segment covering valine 57 to leucine 79 has biased composition (basic and acidic residues). The segment covering lysine 137–alanine 146 has biased composition (basic residues). The span at alanine 462–serine 473 shows a compositional bias: low complexity. The stretch at arginine 578 to aspartate 658 forms a coiled coil. Positions aspartate 749–aspartate 798 are disordered. Serine 762 is modified (phosphoserine). A compositionally biased stretch (basic and acidic residues) spans lysine 789–aspartate 798.

Its subcellular location is the plastid. It is found in the chloroplast. This is an uncharacterized protein from Arabidopsis thaliana (Mouse-ear cress).